Reading from the N-terminus, the 511-residue chain is Trafficking protein particle complex subunit 13 homolog (511 aa).

Belongs to the TRAPPC13 family.

The polypeptide is Trafficking protein particle complex subunit 13 homolog (Dictyostelium discoideum (Social amoeba)).